Reading from the N-terminus, the 174-residue chain is Gamma-crystallin C (174 aa).

2 consecutive Beta/gamma crystallin 'Greek key' domains span residues 2 to 40 (GKIT…RVDS) and 41 to 83 (GCWM…RLIP). C23 is subject to S-methylcysteine. Positions 84 to 87 (HAGS) are connecting peptide. 2 Beta/gamma crystallin 'Greek key' domains span residues 88-128 (HRMR…QVLE) and 129-171 (GCWV…RRVV).

This sequence belongs to the beta/gamma-crystallin family.

Functionally, crystallins are the dominant structural components of the vertebrate eye lens. This is Gamma-crystallin C (Crygc) from Mus musculus (Mouse).